The chain runs to 379 residues: Occlusion-derived virus envelope protein E56 (379 aa).

The chain crosses the membrane as a helical span at residues 156–176 (AGVGVLLAGGAYLTFSAATLV). Asn184 carries an N-linked (GlcNAc...) asparagine; by host glycan. A helical membrane pass occupies residues 320-340 (LMPLIWLIGAVLFLGLIIYLI).

Belongs to the baculoviridae E56 family.

The protein resides in the virion membrane. Its function is as follows. Structural protein that is specific for occlusion-derived virus (ODV) envelopes but not of budded virus (BV). This chain is Occlusion-derived virus envelope protein E56 (ODVP6E), found in Choristoneura fumiferana nuclear polyhedrosis virus (CfMNPV).